A 269-amino-acid chain; its full sequence is Formamidopyrimidine-DNA glycosylase (269 aa).

Residue Pro-2 is the Schiff-base intermediate with DNA of the active site. Glu-3 (proton donor) is an active-site residue. Catalysis depends on Lys-57, which acts as the Proton donor; for beta-elimination activity. DNA is bound by residues His-90, Arg-109, and Lys-150. The FPG-type zinc finger occupies 235–269 (QVYGRKGEPCRVCGTPIVATKHAQRATFYCRHCQK). Arg-259 serves as the catalytic Proton donor; for delta-elimination activity.

The protein belongs to the FPG family. Monomer. It depends on Zn(2+) as a cofactor.

The catalysed reaction is Hydrolysis of DNA containing ring-opened 7-methylguanine residues, releasing 2,6-diamino-4-hydroxy-5-(N-methyl)formamidopyrimidine.. The enzyme catalyses 2'-deoxyribonucleotide-(2'-deoxyribose 5'-phosphate)-2'-deoxyribonucleotide-DNA = a 3'-end 2'-deoxyribonucleotide-(2,3-dehydro-2,3-deoxyribose 5'-phosphate)-DNA + a 5'-end 5'-phospho-2'-deoxyribonucleoside-DNA + H(+). In terms of biological role, involved in base excision repair of DNA damaged by oxidation or by mutagenic agents. Acts as a DNA glycosylase that recognizes and removes damaged bases. Has a preference for oxidized purines, such as 7,8-dihydro-8-oxoguanine (8-oxoG). Has AP (apurinic/apyrimidinic) lyase activity and introduces nicks in the DNA strand. Cleaves the DNA backbone by beta-delta elimination to generate a single-strand break at the site of the removed base with both 3'- and 5'-phosphates. The sequence is that of Formamidopyrimidine-DNA glycosylase from Salmonella enteritidis PT4 (strain P125109).